A 320-amino-acid polypeptide reads, in one-letter code: Mitochondrial glutamate carrier 2 (320 aa).

Solcar repeat units follow at residues 11 to 97, 105 to 215, and 224 to 313; these read LSIS…LRQL, RNLK…LNQL, and ASFT…GIGE. Transmembrane regions (helical) follow at residues 17–37, 66–86, and 110–128; these read LINGGIAGLVGVTCVFPIDLA, FLGMYRGAAVNLTLVTPEKAI, and EMLAGCGAGICQVVITCPM. Phosphoserine is present on Ser-150. Helical transmembrane passes span 190-210, 230-250, and 293-313; these read GLGATLLRDIPFSIIYFPLFA, FVAGCTAGSVAAVAVTPLDVL, and ALVIAPLFGIAQGVYFIGIGE.

The protein belongs to the mitochondrial carrier (TC 2.A.29) family.

It is found in the mitochondrion inner membrane. The catalysed reaction is L-glutamate(in) + H(+)(in) = L-glutamate(out) + H(+)(out). Its function is as follows. Responsible for the transport of glutamate from the cytosol into the mitochondrial matrix with the concomitant import of a proton (symport system). The polypeptide is Mitochondrial glutamate carrier 2 (Slc25a18) (Mus musculus (Mouse)).